The chain runs to 156 residues: Cyanate hydratase (156 aa).

Residues Arg-96, Glu-99, and Ser-122 contribute to the active site.

The protein belongs to the cyanase family.

It catalyses the reaction cyanate + hydrogencarbonate + 3 H(+) = NH4(+) + 2 CO2. Functionally, catalyzes the reaction of cyanate with bicarbonate to produce ammonia and carbon dioxide. This Burkholderia vietnamiensis (strain G4 / LMG 22486) (Burkholderia cepacia (strain R1808)) protein is Cyanate hydratase.